A 353-amino-acid chain; its full sequence is Pleckstrin-2 (353 aa).

An N-acetylmethionine modification is found at M1. The PH 1 domain maps to 4–104 (GVLKEGFLVK…WAFEITGAIH (101 aa)). S120 carries the post-translational modification Phosphoserine. Residues 139-225 (SNTGIRSSPN…DSTALYTFAE (87 aa)) enclose the DEP domain. In terms of domain architecture, PH 2 spans 247–353 (TVVKQGYLAK…EWIEAIKKLT (107 aa)).

Its subcellular location is the cell projection. It localises to the lamellipodium membrane. It is found in the cytoplasm. The protein resides in the cytoskeleton. May help orchestrate cytoskeletal arrangement. Contribute to lamellipodia formation. The protein is Pleckstrin-2 (PLEK2) of Homo sapiens (Human).